Here is a 466-residue protein sequence, read N- to C-terminus: NADPH:adrenodoxin oxidoreductase, mitochondrial (466 aa).

FAD-binding residues include Ala40, Glu61, Leu69, and Leu105. Residues 176–179 (QGNV), 220–221 (RR), and Glu232 contribute to the NADP(+) site. Residues Trp379 and 386–388 (GVI) contribute to the FAD site. Residue Gly386 participates in NADP(+) binding.

It belongs to the ferredoxin--NADP reductase type 1 family. The cofactor is FAD. In terms of tissue distribution, expressed predominantly in prothoracic gland of the larval ring gland and nurse cells of the adult ovary. Low expression is all adult tissues examined.

Its subcellular location is the mitochondrion inner membrane. The enzyme catalyses 2 reduced [adrenodoxin] + NADP(+) + H(+) = 2 oxidized [adrenodoxin] + NADPH. The protein operates within steroid metabolism; cholesterol metabolism. Its function is as follows. Required for synthesis of steroid hormones, for olfactory sensory behavior and completion of the second larval molt (a steroid mediated developmental transition) and pupariation. This chain is NADPH:adrenodoxin oxidoreductase, mitochondrial (dare), found in Drosophila melanogaster (Fruit fly).